The primary structure comprises 164 residues: UPF0304 protein YPDSF_1971 (164 aa).

Belongs to the UPF0304 family.

The polypeptide is UPF0304 protein YPDSF_1971 (Yersinia pestis (strain Pestoides F)).